Reading from the N-terminus, the 322-residue chain is Acetyl-coenzyme A carboxylase carboxyl transferase subunit alpha (322 aa).

One can recognise a CoA carboxyltransferase C-terminal domain in the interval 39-293 (RLQKKSQALT…RRALTDTLAE (255 aa)).

Belongs to the AccA family. As to quaternary structure, acetyl-CoA carboxylase is a heterohexamer composed of biotin carboxyl carrier protein (AccB), biotin carboxylase (AccC) and two subunits each of ACCase subunit alpha (AccA) and ACCase subunit beta (AccD).

It is found in the cytoplasm. It catalyses the reaction N(6)-carboxybiotinyl-L-lysyl-[protein] + acetyl-CoA = N(6)-biotinyl-L-lysyl-[protein] + malonyl-CoA. Its pathway is lipid metabolism; malonyl-CoA biosynthesis; malonyl-CoA from acetyl-CoA: step 1/1. Component of the acetyl coenzyme A carboxylase (ACC) complex. First, biotin carboxylase catalyzes the carboxylation of biotin on its carrier protein (BCCP) and then the CO(2) group is transferred by the carboxyltransferase to acetyl-CoA to form malonyl-CoA. This chain is Acetyl-coenzyme A carboxylase carboxyl transferase subunit alpha, found in Thiobacillus denitrificans (strain ATCC 25259 / T1).